Reading from the N-terminus, the 189-residue chain is Phosphoheptose isomerase (189 aa).

In terms of domain architecture, SIS spans 34–189 (LVEAFRKGNK…CDLVEKALFA (156 aa)). 49 to 51 (NGG) provides a ligand contact to substrate. Zn(2+)-binding residues include H58 and E62. Residues E62, 91-92 (ND), 117-119 (STS), S122, and Q169 contribute to the substrate site. Residues Q169 and H177 each contribute to the Zn(2+) site.

The protein belongs to the SIS family. GmhA subfamily. In terms of assembly, homotetramer. Zn(2+) is required as a cofactor.

The protein localises to the cytoplasm. The catalysed reaction is 2 D-sedoheptulose 7-phosphate = D-glycero-alpha-D-manno-heptose 7-phosphate + D-glycero-beta-D-manno-heptose 7-phosphate. It participates in carbohydrate biosynthesis; D-glycero-D-manno-heptose 7-phosphate biosynthesis; D-glycero-alpha-D-manno-heptose 7-phosphate and D-glycero-beta-D-manno-heptose 7-phosphate from sedoheptulose 7-phosphate: step 1/1. In terms of biological role, catalyzes the isomerization of sedoheptulose 7-phosphate in D-glycero-D-manno-heptose 7-phosphate. The polypeptide is Phosphoheptose isomerase (Pelobacter propionicus (strain DSM 2379 / NBRC 103807 / OttBd1)).